An 87-amino-acid polypeptide reads, in one-letter code: Small ribosomal subunit protein bS18 (87 aa).

It belongs to the bacterial ribosomal protein bS18 family. Part of the 30S ribosomal subunit. Forms a tight heterodimer with protein bS6.

In terms of biological role, binds as a heterodimer with protein bS6 to the central domain of the 16S rRNA, where it helps stabilize the platform of the 30S subunit. The chain is Small ribosomal subunit protein bS18 from Mesomycoplasma hyopneumoniae (strain 232) (Mycoplasma hyopneumoniae).